A 397-amino-acid polypeptide reads, in one-letter code: Cytoplasmic tRNA 2-thiolation protein 2 (397 aa).

The protein belongs to the CTU2/NCS2 family.

Its subcellular location is the cytoplasm. The protein operates within tRNA modification; 5-methoxycarbonylmethyl-2-thiouridine-tRNA biosynthesis. In terms of biological role, plays a central role in 2-thiolation of mcm(5)S(2)U at tRNA wobble positions of tRNA(Lys), tRNA(Glu) and tRNA(Gln). May act by forming a heterodimer with NCS6/CTU1 that ligates sulfur from thiocarboxylated URM1 onto the uridine of tRNAs at wobble position. This Drosophila grimshawi (Hawaiian fruit fly) protein is Cytoplasmic tRNA 2-thiolation protein 2.